The primary structure comprises 547 residues: Glucose-6-phosphate isomerase (547 aa).

Glutamate 351 (proton donor) is an active-site residue. Catalysis depends on residues histidine 382 and lysine 511.

The protein belongs to the GPI family.

It is found in the cytoplasm. It carries out the reaction alpha-D-glucose 6-phosphate = beta-D-fructose 6-phosphate. It functions in the pathway carbohydrate biosynthesis; gluconeogenesis. The protein operates within carbohydrate degradation; glycolysis; D-glyceraldehyde 3-phosphate and glycerone phosphate from D-glucose: step 2/4. Its function is as follows. Catalyzes the reversible isomerization of glucose-6-phosphate to fructose-6-phosphate. The sequence is that of Glucose-6-phosphate isomerase from Xanthobacter autotrophicus (strain ATCC BAA-1158 / Py2).